Consider the following 296-residue polypeptide: N-acetylmuramic acid 6-phosphate etherase 2 (296 aa).

The region spanning 55–218 (IVANFKAGGR…STASMVGIGK (164 aa)) is the SIS domain. Glutamate 83 acts as the Proton donor in catalysis. The active site involves glutamate 114.

It belongs to the GCKR-like family. MurNAc-6-P etherase subfamily. Homodimer.

It carries out the reaction N-acetyl-D-muramate 6-phosphate + H2O = N-acetyl-D-glucosamine 6-phosphate + (R)-lactate. Its pathway is amino-sugar metabolism; N-acetylmuramate degradation. In terms of biological role, specifically catalyzes the cleavage of the D-lactyl ether substituent of MurNAc 6-phosphate, producing GlcNAc 6-phosphate and D-lactate. The chain is N-acetylmuramic acid 6-phosphate etherase 2 from Lactiplantibacillus plantarum (strain ATCC BAA-793 / NCIMB 8826 / WCFS1) (Lactobacillus plantarum).